The following is a 381-amino-acid chain: L-lactate dehydrogenase (381 aa).

The FMN hydroxy acid dehydrogenase domain occupies 1 to 380 (MIISSTNDYR…TRDALVDLSK (380 aa)). Y24 is a substrate binding site. FMN contacts are provided by S106 and Q127. Y129 contacts substrate. An FMN-binding site is contributed by T155. R164 lines the substrate pocket. K251 contributes to the FMN binding site. The active-site Proton acceptor is the H275. Substrate is bound at residue R278. 306–330 (DSGIRNGLDIVRMLALGADATMLGR) is an FMN binding site.

This sequence belongs to the FMN-dependent alpha-hydroxy acid dehydrogenase family. FMN serves as cofactor.

It is found in the cell inner membrane. The enzyme catalyses (S)-lactate + A = pyruvate + AH2. Catalyzes the conversion of L-lactate to pyruvate. Is coupled to the respiratory chain. This Actinobacillus pleuropneumoniae serotype 3 (strain JL03) protein is L-lactate dehydrogenase.